The primary structure comprises 677 residues: Methionine--tRNA ligase (677 aa).

Positions 15 to 25 (PYANGSIHLGH) match the 'HIGH' region motif. Zn(2+) is bound by residues C146, C149, C159, and C162. A 'KMSKS' region motif is present at residues 333-337 (KMSKS). Residue K336 participates in ATP binding. Residues 575-677 (DFAKVDLRVA…AGAKPGHQVK (103 aa)) enclose the tRNA-binding domain.

It belongs to the class-I aminoacyl-tRNA synthetase family. MetG type 1 subfamily. In terms of assembly, homodimer. It depends on Zn(2+) as a cofactor.

It is found in the cytoplasm. The enzyme catalyses tRNA(Met) + L-methionine + ATP = L-methionyl-tRNA(Met) + AMP + diphosphate. Functionally, is required not only for elongation of protein synthesis but also for the initiation of all mRNA translation through initiator tRNA(fMet) aminoacylation. The polypeptide is Methionine--tRNA ligase (Escherichia coli O81 (strain ED1a)).